The following is a 338-amino-acid chain: Diacylglycerol acyltransferase/mycolyltransferase Ag85A (338 aa).

Residues 1-42 form the signal peptide; the sequence is MQLVDRVRGAVTGMSRRLVVGAVGAALVSGLVGAVGGTATAG. Position 85 to 86 (85 to 86) interacts with substrate; it reads LR. The fibronectin-binding stretch occupies residues 101–111; it reads FEWYDQSGLSV. Cys-130 and Cys-135 are joined by a disulfide. Positions 169 and 197 each coordinate substrate. The active-site Nucleophile is the Ser-169. The active site involves Glu-273. Substrate-binding positions include 275 to 278, Lys-282, and 305 to 307; these read FVRT and HSW. The active site involves His-305.

This sequence belongs to the mycobacterial A85 antigen family. As to quaternary structure, homodimer.

The protein localises to the secreted. It is found in the cell wall. It localises to the cytoplasm. It catalyses the reaction an acyl-CoA + a 1,2-diacyl-sn-glycerol = a triacyl-sn-glycerol + CoA. It carries out the reaction 2 alpha,alpha'-trehalose 6-mycolate = alpha,alpha'-trehalose 6,6'-bismycolate + alpha,alpha-trehalose. Functionally, the antigen 85 proteins (FbpA, FbpB, FbpC) are responsible for the high affinity of mycobacteria for fibronectin, a large adhesive glycoprotein, which facilitates the attachment of M.tuberculosis to murine alveolar macrophages (AMs). They also help to maintain the integrity of the cell wall by catalyzing the transfer of mycolic acids to cell wall arabinogalactan, and through the synthesis of alpha,alpha-trehalose dimycolate (TDM, cord factor). They catalyze the transfer of a mycoloyl residue from one molecule of alpha,alpha-trehalose monomycolate (TMM) to another TMM, leading to the formation of TDM. FbpA mediates triacylglycerol (TAG) formation with long-chain acyl-CoA as the acyl donor and 1,2-dipalmitoyl-sn-glycerol (1,2-dipalmitin) as the acyl acceptor. It has a preference for C26:0-CoA over C18:1-CoA. This Mycobacterium bovis (strain ATCC BAA-935 / AF2122/97) protein is Diacylglycerol acyltransferase/mycolyltransferase Ag85A (fbpA).